The sequence spans 1653 residues: Alpha-2-macroglobulin (1653 aa).

The first 17 residues, 1–17 (MKKLRVAACMLMLALAG), serve as a signal peptide directing secretion. The N-palmitoyl cysteine moiety is linked to residue cysteine 18. The S-diacylglycerol cysteine moiety is linked to residue cysteine 18. A cross-link (isoglutamyl cysteine thioester (Cys-Gln)) is located at residues 1187–1190 (CLEQ). A coiled-coil region spans residues 1559–1589 (NQNLANGSASLEQSGGEVQNLLNQMQQASIK).

The protein belongs to the protease inhibitor I39 (alpha-2-macroglobulin) family. Bacterial alpha-2-macroglobulin subfamily. In terms of assembly, may form homooligomers.

It localises to the cell inner membrane. Its function is as follows. Protects the bacterial cell from host peptidases. Acts by a 'trapping' mechanism. Cleavage of the bait-region domain by host peptidases leads to a global conformational change, which results in entrapment of the host peptidase and activation of the thioester bond that covalently binds the attacking host peptidase. Trapped peptidases are still active except against very large substrates. May protect the entire periplam, including the lipoproteins anchored to the periplasmic side of the outer membrane, against intruding endopeptidases. The sequence is that of Alpha-2-macroglobulin (yfhM) from Escherichia coli (strain K12).